The primary structure comprises 138 residues: Putative pre-16S rRNA nuclease (138 aa).

It belongs to the YqgF nuclease family.

The protein localises to the cytoplasm. In terms of biological role, could be a nuclease involved in processing of the 5'-end of pre-16S rRNA. The chain is Putative pre-16S rRNA nuclease from Klebsiella pneumoniae (strain 342).